A 27-amino-acid polypeptide reads, in one-letter code: Ranatuerin-2Cb (27 aa).

Cys20 and Cys25 form a disulfide bridge.

As to expression, expressed by the skin glands.

The protein localises to the secreted. In terms of biological role, antibacterial activity against Gram-positive bacterium S.aureus (MIC=40 uM) and Gram-negative bacterium E.coli (MIC=2 uM). Has activity against C.albicans (MIC=46 uM). The chain is Ranatuerin-2Cb from Lithobates clamitans (Green frog).